Here is a 31-residue protein sequence, read N- to C-terminus: Cytolysin Oshem 2 (31 aa).

It localises to the secreted. Its subcellular location is the nematocyst. It is found in the target cell membrane. Functionally, cytolysin that shows weak hemolysis and weak myonecrosis. The polypeptide is Cytolysin Oshem 2 (Olindias sambaquiensis (Hydromedusa)).